The chain runs to 31 residues: Bacteriocin lactocin-705 (31 aa).

Functionally, antibacterial activity against several lactic acid bacteria, Listeria, Streptococci, etc. This chain is Bacteriocin lactocin-705, found in Lacticaseibacillus paracasei (Lactobacillus paracasei).